A 190-amino-acid chain; its full sequence is uncharacterized protein (190 aa).

This is an uncharacterized protein from Acanthamoeba polyphaga mimivirus (APMV).